The primary structure comprises 623 residues: Glutathione import ATP-binding protein GsiA (623 aa).

2 consecutive ABC transporter domains span residues 15-269 (VENL…RALL) and 314-564 (LRVR…RKLL). ATP contacts are provided by residues 49 to 56 (GESGSGKS) and 357 to 364 (GESGSGKS).

Belongs to the ABC transporter superfamily. Glutathione importer (TC 3.A.1.5.11) family. The complex is composed of two ATP-binding proteins (GsiA), two transmembrane proteins (GsiC and GsiD) and a solute-binding protein (GsiB).

It is found in the cell inner membrane. The enzyme catalyses glutathione(out) + ATP + H2O = glutathione(in) + ADP + phosphate + H(+). Its function is as follows. Part of the ABC transporter complex GsiABCD involved in glutathione import. Responsible for energy coupling to the transport system. The protein is Glutathione import ATP-binding protein GsiA of Shigella sonnei (strain Ss046).